We begin with the raw amino-acid sequence, 249 residues long: Coproheme decarboxylase (249 aa).

Residues Arg-131, Tyr-145–Lys-149, His-172, and Gln-185 each bind Fe-coproporphyrin III. The active site involves Tyr-145.

The protein belongs to the ChdC family. Type 1 subfamily. The cofactor is Fe-coproporphyrin III.

The enzyme catalyses Fe-coproporphyrin III + 2 H2O2 + 2 H(+) = heme b + 2 CO2 + 4 H2O. It carries out the reaction Fe-coproporphyrin III + H2O2 + H(+) = harderoheme III + CO2 + 2 H2O. The catalysed reaction is harderoheme III + H2O2 + H(+) = heme b + CO2 + 2 H2O. It participates in porphyrin-containing compound metabolism; protoheme biosynthesis. Its function is as follows. Involved in coproporphyrin-dependent heme b biosynthesis. Catalyzes the decarboxylation of Fe-coproporphyrin III (coproheme) to heme b (protoheme IX), the last step of the pathway. The reaction occurs in a stepwise manner with a three-propionate intermediate. In Staphylococcus epidermidis (strain ATCC 35984 / DSM 28319 / BCRC 17069 / CCUG 31568 / BM 3577 / RP62A), this protein is Coproheme decarboxylase.